Consider the following 1460-residue polypeptide: Centrosomal protein of 164 kDa (1460 aa).

The tract at residues 1–194 (MAGRPLRIGD…PSQGLKTSAY (194 aa)) is interaction with ATRIP. Positions 56 to 89 (APLPGEWKPCQDITGDIYYFNFANGQSMWDHPCD) constitute a WW domain. Positions 107–135 (GAIKKKKKKKEKKDKKDRDPPKSSLALGS) are disordered. Residues 109-119 (IKKKKKKKEKK) are compositionally biased toward basic residues. At Ser-186 the chain carries Phosphoserine; by ATR and ATM. Ser-201 carries the phosphoserine modification. Disordered regions lie at residues 213 to 412 (GLGE…HGLD), 440 to 593 (AQQP…AALK), and 658 to 719 (EEAR…QKNR). Over residues 217 to 227 (ETNEEDEEESD) the composition is skewed to acidic residues. The span at 256-270 (ESLRTSQPEEKKDVS) shows a compositional bias: basic and acidic residues. Low complexity predominate over residues 285-296 (SSPGADSSLSSA). 2 stretches are compositionally biased toward basic and acidic residues: residues 310–323 (LPEK…EPKI) and 357–367 (EGSRREEAAKE). The segment covering 453–464 (QSSQDELQSKQS) has biased composition (low complexity). The segment covering 465–481 (KGLEERLSPPLPHEERA) has biased composition (basic and acidic residues). The span at 514–525 (SAASLSLQLSLQ) shows a compositional bias: low complexity. The segment covering 537-546 (EKGKEQHSQA) has biased composition (basic and acidic residues). Ser-566 bears the Phosphoserine mark. Basic and acidic residues-rich tracts occupy residues 658 to 668 (EEARMREEESQ) and 686 to 719 (DQIR…QKNR). The stretch at 1154-1206 (GIKALEDMRKNLEKETRHLDEMKSAMRKGHNLLKKKEEKLNQLESSLWEEASD) forms a coiled coil. The tract at residues 1290–1310 (PPPLLASMPAQLPPRDPKSTP) is disordered. Ser-1386, Ser-1388, and Ser-1443 each carry phosphoserine.

In terms of assembly, interacts (via N-terminus) with ATRIP. Interacts with ATM, ATR and MDC1. Interacts with XPA (via N-terminus) upon UV irradiation. Interacts with CEP83, CCDC92, TTBK2, DVL3, NPHP3 and weakly with NPHP4. Interacts with DZIP1. Post-translationally, phosphorylation at Ser-186 is induced upon DNA-damage caused by treatment with IR irradiation, UV irradiation, hydroxyurea or amphidicolin. Also MDC1-mediated chromatin remodeling is critical for DNA damage-induced phosphorylation. In terms of tissue distribution, expressed in several cell lines.

It is found in the cytoplasm. The protein resides in the cytoskeleton. It localises to the microtubule organizing center. Its subcellular location is the centrosome. The protein localises to the centriole. It is found in the nucleus. Functionally, plays a role in microtubule organization and/or maintenance for the formation of primary cilia (PC), a microtubule-based structure that protrudes from the surface of epithelial cells. Plays a critical role in G2/M checkpoint and nuclear divisions. A key player in the DNA damage-activated ATR/ATM signaling cascade since it is required for the proper phosphorylation of H2AX, RPA, CHEK2 and CHEK1. Plays a critical role in chromosome segregation, acting as a mediator required for the maintenance of genomic stability through modulation of MDC1, RPA and CHEK1. In Homo sapiens (Human), this protein is Centrosomal protein of 164 kDa (CEP164).